A 440-amino-acid chain; its full sequence is 23S rRNA (uracil(1939)-C(5))-methyltransferase RlmD (440 aa).

A TRAM domain is found at 6–64 (PIHNAQPEQVFIESLDTEGRGIARVEGKVLFVDGALPGERVWARRTQNHKSFDRAELLQ). Residues Cys-77, Cys-83, Cys-86, and Cys-164 each contribute to the [4Fe-4S] cluster site. Gln-273, Phe-302, Asn-307, Glu-323, Asp-351, and Asp-372 together coordinate S-adenosyl-L-methionine. The active-site Nucleophile is Cys-397.

Belongs to the class I-like SAM-binding methyltransferase superfamily. RNA M5U methyltransferase family. RlmD subfamily.

The catalysed reaction is uridine(1939) in 23S rRNA + S-adenosyl-L-methionine = 5-methyluridine(1939) in 23S rRNA + S-adenosyl-L-homocysteine + H(+). Catalyzes the formation of 5-methyl-uridine at position 1939 (m5U1939) in 23S rRNA. This Acidithiobacillus ferrooxidans (strain ATCC 23270 / DSM 14882 / CIP 104768 / NCIMB 8455) (Ferrobacillus ferrooxidans (strain ATCC 23270)) protein is 23S rRNA (uracil(1939)-C(5))-methyltransferase RlmD.